The sequence spans 177 residues: Transcription termination/antitermination protein NusG (177 aa).

The 26-residue stretch at 125–150 (EGENVRITEGPFANFTAIVEEYDMVR) folds into the KOW domain.

It belongs to the NusG family.

Functionally, participates in transcription elongation, termination and antitermination. The protein is Transcription termination/antitermination protein NusG of Campylobacter jejuni subsp. jejuni serotype O:2 (strain ATCC 700819 / NCTC 11168).